Reading from the N-terminus, the 215-residue chain is Adenylate kinase (215 aa).

10-15 (GAGKGT) lines the ATP pocket. Residues 30 to 59 (STGDMLRAAVKAGTELGLKAKSVMDAGGLV) form an NMP region. AMP-binding positions include Thr-31, Arg-36, 57–59 (GLV), 85–88 (GFPR), and Gln-92. An LID region spans residues 122–159 (GRRVHPASGRVYHTEYNPPKVAGKDDVSGEELVQREDD). ATP contacts are provided by residues Arg-123 and 132 to 133 (VY). Residues Arg-156 and Arg-167 each coordinate AMP. Gly-201 is an ATP binding site.

It belongs to the adenylate kinase family. In terms of assembly, monomer.

The protein localises to the cytoplasm. It carries out the reaction AMP + ATP = 2 ADP. Its pathway is purine metabolism; AMP biosynthesis via salvage pathway; AMP from ADP: step 1/1. Its function is as follows. Catalyzes the reversible transfer of the terminal phosphate group between ATP and AMP. Plays an important role in cellular energy homeostasis and in adenine nucleotide metabolism. The protein is Adenylate kinase of Ectopseudomonas mendocina (strain ymp) (Pseudomonas mendocina).